The primary structure comprises 420 residues: Probable protein phosphatase 2C 76 (420 aa).

The PPM-type phosphatase domain maps to Ser101 to Phe347. Mn(2+)-binding residues include Asp137, Gly138, Asp299, and Asp338. Residues Glu353 to Glu420 form a disordered region. Residues Pro403–Glu420 show a composition bias toward basic and acidic residues.

Belongs to the PP2C family. The cofactor is Mg(2+). Mn(2+) serves as cofactor.

The catalysed reaction is O-phospho-L-seryl-[protein] + H2O = L-seryl-[protein] + phosphate. The enzyme catalyses O-phospho-L-threonyl-[protein] + H2O = L-threonyl-[protein] + phosphate. This is Probable protein phosphatase 2C 76 from Arabidopsis thaliana (Mouse-ear cress).